The following is a 485-amino-acid chain: Cytolytic protein enterolobin (485 aa).

2 disulfide bridges follow: C34-C98 and C183-C189.

This sequence belongs to the aerolysin family. As to quaternary structure, oligomerizes as a hexamer. Post-translationally, the N-terminus is blocked.

Cytolytic protein with insecticidal activity. Acts as a pro-inflammatory agent. In Enterolobium contortisiliquum (Pacara earpod tree), this protein is Cytolytic protein enterolobin.